The sequence spans 263 residues: Endonuclease 8 (263 aa).

Pro-2 functions as the Schiff-base intermediate with DNA in the catalytic mechanism. Residue Glu-3 is the Proton donor of the active site. The active-site Proton donor; for beta-elimination activity is Lys-53. DNA-binding residues include Gln-70, Arg-125, and Asn-169. Residues 229–263 (KVFHRDGEACERCGGIIEKTTLSSRPFYWCPHCQK) form an FPG-type zinc finger. The active-site Proton donor; for delta-elimination activity is Arg-253.

It belongs to the FPG family. Zn(2+) serves as cofactor.

It carries out the reaction 2'-deoxyribonucleotide-(2'-deoxyribose 5'-phosphate)-2'-deoxyribonucleotide-DNA = a 3'-end 2'-deoxyribonucleotide-(2,3-dehydro-2,3-deoxyribose 5'-phosphate)-DNA + a 5'-end 5'-phospho-2'-deoxyribonucleoside-DNA + H(+). Involved in base excision repair of DNA damaged by oxidation or by mutagenic agents. Acts as a DNA glycosylase that recognizes and removes damaged bases. Has a preference for oxidized pyrimidines, such as thymine glycol, 5,6-dihydrouracil and 5,6-dihydrothymine. Has AP (apurinic/apyrimidinic) lyase activity and introduces nicks in the DNA strand. Cleaves the DNA backbone by beta-delta elimination to generate a single-strand break at the site of the removed base with both 3'- and 5'-phosphates. This is Endonuclease 8 from Salmonella schwarzengrund (strain CVM19633).